The following is a 429-amino-acid chain: UDP-N-acetylglucosamine 1-carboxyvinyltransferase (429 aa).

22–23 (KN) is a phosphoenolpyruvate binding site. Arg102 is a binding site for UDP-N-acetyl-alpha-D-glucosamine. The active-site Proton donor is the Cys126. Cys126 bears the 2-(S-cysteinyl)pyruvic acid O-phosphothioketal mark. UDP-N-acetyl-alpha-D-glucosamine-binding positions include 131 to 135 (RPVDL), Asp316, and Ile338.

The protein belongs to the EPSP synthase family. MurA subfamily.

The protein resides in the cytoplasm. The catalysed reaction is phosphoenolpyruvate + UDP-N-acetyl-alpha-D-glucosamine = UDP-N-acetyl-3-O-(1-carboxyvinyl)-alpha-D-glucosamine + phosphate. It functions in the pathway cell wall biogenesis; peptidoglycan biosynthesis. In terms of biological role, cell wall formation. Adds enolpyruvyl to UDP-N-acetylglucosamine. In Nitrobacter hamburgensis (strain DSM 10229 / NCIMB 13809 / X14), this protein is UDP-N-acetylglucosamine 1-carboxyvinyltransferase.